The primary structure comprises 676 residues: Basic proline-rich protein (676 aa).

The signal sequence occupies residues 1–16 (MLPILLSVALLALSSA). Phosphoserine occurs at positions 28 and 30. The segment at 29 to 676 (NSAEKFLRPP…PRPPPGPPPQ (648 aa)) is disordered. Pro residues-rich tracts occupy residues 36–50 (RPPP…PPPE), 71–424 (GPAP…PPAD), and 442–676 (PPPA…PPPQ). A propeptide spanning residues 409–457 (APPGARPPPPPPPPADEPQQGPAPSGDKPKKKPPPPAGPPPPGPPSPGP) is cleaved from the precursor.

As to expression, acinar cells and secretory granules of the parotid gland.

It localises to the secreted. Functionally, the parotid hormone stimulates dentinal fluid transport in teeth. The sequence is that of Basic proline-rich protein from Sus scrofa (Pig).